The primary structure comprises 90 residues: Probable Fe(2+)-trafficking protein (90 aa).

Belongs to the Fe(2+)-trafficking protein family.

Functionally, could be a mediator in iron transactions between iron acquisition and iron-requiring processes, such as synthesis and/or repair of Fe-S clusters in biosynthetic enzymes. The sequence is that of Probable Fe(2+)-trafficking protein from Xylella fastidiosa (strain 9a5c).